A 247-amino-acid polypeptide reads, in one-letter code: tRNA (guanine-N(1)-)-methyltransferase (247 aa).

S-adenosyl-L-methionine-binding positions include glycine 116 and 135-140 (IGDYVL).

The protein belongs to the RNA methyltransferase TrmD family. Homodimer.

The protein localises to the cytoplasm. The catalysed reaction is guanosine(37) in tRNA + S-adenosyl-L-methionine = N(1)-methylguanosine(37) in tRNA + S-adenosyl-L-homocysteine + H(+). Its function is as follows. Specifically methylates guanosine-37 in various tRNAs. In Symbiobacterium thermophilum (strain DSM 24528 / JCM 14929 / IAM 14863 / T), this protein is tRNA (guanine-N(1)-)-methyltransferase.